The sequence spans 92 residues: MIIKPIGERVLLKHQKKQEVTKGGIYIPESARQEKKEGIVISVGTFEDGKELPLKKGDHVIYGGYQSDEIEIDDEKYIFVDFKDILATIAEE.

Belongs to the GroES chaperonin family. Heptamer of 7 subunits arranged in a ring. Interacts with the chaperonin GroEL.

It is found in the cytoplasm. Its function is as follows. Together with the chaperonin GroEL, plays an essential role in assisting protein folding. The GroEL-GroES system forms a nano-cage that allows encapsulation of the non-native substrate proteins and provides a physical environment optimized to promote and accelerate protein folding. GroES binds to the apical surface of the GroEL ring, thereby capping the opening of the GroEL channel. The chain is Co-chaperonin GroES from Methanosarcina barkeri (strain Fusaro / DSM 804).